We begin with the raw amino-acid sequence, 932 residues long: Protein translocase subunit SecA (932 aa).

Residues Gln-87, 105-109 (GEGKT), and Asp-515 each bind ATP. Residues Cys-916, Cys-918, Cys-927, and His-928 each contribute to the Zn(2+) site.

The protein belongs to the SecA family. Monomer and homodimer. Part of the essential Sec protein translocation apparatus which comprises SecA, SecYEG and auxiliary proteins SecDF-YajC and YidC. Zn(2+) serves as cofactor.

The protein localises to the cell inner membrane. It localises to the cytoplasm. The catalysed reaction is ATP + H2O + cellular proteinSide 1 = ADP + phosphate + cellular proteinSide 2.. In terms of biological role, part of the Sec protein translocase complex. Interacts with the SecYEG preprotein conducting channel. Has a central role in coupling the hydrolysis of ATP to the transfer of proteins into and across the cell membrane, serving both as a receptor for the preprotein-SecB complex and as an ATP-driven molecular motor driving the stepwise translocation of polypeptide chains across the membrane. This chain is Protein translocase subunit SecA, found in Burkholderia lata (strain ATCC 17760 / DSM 23089 / LMG 22485 / NCIMB 9086 / R18194 / 383).